A 155-amino-acid chain; its full sequence is 17.4 kDa class III heat shock protein (155 aa).

In terms of domain architecture, sHSP spans 35 to 155; that stretch reads GRGSSNNIPI…KPKTVQIAVS (121 aa).

The protein belongs to the small heat shock protein (HSP20) family. May form oligomeric structures.

The protein localises to the cytoplasm. The sequence is that of 17.4 kDa class III heat shock protein (HSP17.4B) from Arabidopsis thaliana (Mouse-ear cress).